The sequence spans 256 residues: UPF0246 protein Bpet1601 (256 aa).

Belongs to the UPF0246 family.

The protein is UPF0246 protein Bpet1601 of Bordetella petrii (strain ATCC BAA-461 / DSM 12804 / CCUG 43448).